A 122-amino-acid polypeptide reads, in one-letter code: MSLTNEQIVDAIAEKSLMEVMELVKAIEEKFGVSAAAPVAVAAAAGPAAAVEEQTEFTVTLKSAGDKKVEVIKAVRAITGLGLKEAKDLAEAGGVLKEGASKEDAEKMKKDLEAAGATVEVK.

It belongs to the bacterial ribosomal protein bL12 family. In terms of assembly, homodimer. Part of the ribosomal stalk of the 50S ribosomal subunit. Forms a multimeric L10(L12)X complex, where L10 forms an elongated spine to which 2 to 4 L12 dimers bind in a sequential fashion. Binds GTP-bound translation factors.

Forms part of the ribosomal stalk which helps the ribosome interact with GTP-bound translation factors. Is thus essential for accurate translation. This Stenotrophomonas maltophilia (strain K279a) protein is Large ribosomal subunit protein bL12.